The following is a 53-amino-acid chain: UPF0391 membrane protein BamMC406_6344 (53 aa).

A run of 2 helical transmembrane segments spans residues 5–25 (AIIF…GIAA) and 30–50 (IAKI…LLGV).

Belongs to the UPF0391 family.

It is found in the cell membrane. This chain is UPF0391 membrane protein BamMC406_6344, found in Burkholderia ambifaria (strain MC40-6).